The primary structure comprises 98 residues: uncharacterized protein (98 aa).

Belongs to the CFAP97 family.

This is an uncharacterized protein from Homo sapiens (Human).